A 98-amino-acid chain; its full sequence is Large ribosomal subunit protein uL23 (98 aa).

It belongs to the universal ribosomal protein uL23 family. In terms of assembly, part of the 50S ribosomal subunit. Contacts protein L29, and trigger factor when it is bound to the ribosome.

Functionally, one of the early assembly proteins it binds 23S rRNA. One of the proteins that surrounds the polypeptide exit tunnel on the outside of the ribosome. Forms the main docking site for trigger factor binding to the ribosome. The polypeptide is Large ribosomal subunit protein uL23 (Lactobacillus gasseri (strain ATCC 33323 / DSM 20243 / BCRC 14619 / CIP 102991 / JCM 1131 / KCTC 3163 / NCIMB 11718 / NCTC 13722 / AM63)).